Here is a 78-residue protein sequence, read N- to C-terminus: Large ribosomal subunit protein uL24 (78 aa).

The protein belongs to the universal ribosomal protein uL24 family. As to quaternary structure, part of the 50S ribosomal subunit.

Its function is as follows. One of two assembly initiator proteins, it binds directly to the 5'-end of the 23S rRNA, where it nucleates assembly of the 50S subunit. In terms of biological role, one of the proteins that surrounds the polypeptide exit tunnel on the outside of the subunit. In Campylobacter curvus (strain 525.92), this protein is Large ribosomal subunit protein uL24.